A 556-amino-acid chain; its full sequence is 2-succinyl-5-enolpyruvyl-6-hydroxy-3-cyclohexene-1-carboxylate synthase (556 aa).

Belongs to the TPP enzyme family. MenD subfamily. In terms of assembly, homodimer. It depends on Mg(2+) as a cofactor. Mn(2+) serves as cofactor. Requires thiamine diphosphate as cofactor.

It catalyses the reaction isochorismate + 2-oxoglutarate + H(+) = 5-enolpyruvoyl-6-hydroxy-2-succinyl-cyclohex-3-ene-1-carboxylate + CO2. It functions in the pathway quinol/quinone metabolism; 1,4-dihydroxy-2-naphthoate biosynthesis; 1,4-dihydroxy-2-naphthoate from chorismate: step 2/7. The protein operates within quinol/quinone metabolism; menaquinone biosynthesis. Functionally, catalyzes the thiamine diphosphate-dependent decarboxylation of 2-oxoglutarate and the subsequent addition of the resulting succinic semialdehyde-thiamine pyrophosphate anion to isochorismate to yield 2-succinyl-5-enolpyruvyl-6-hydroxy-3-cyclohexene-1-carboxylate (SEPHCHC). The polypeptide is 2-succinyl-5-enolpyruvyl-6-hydroxy-3-cyclohexene-1-carboxylate synthase (Shigella sonnei (strain Ss046)).